The following is a 271-amino-acid chain: Phosphate import ATP-binding protein PstB 2 (271 aa).

An ABC transporter domain is found at 25-266 (MATEDLHVYY…PQQKQTEDYI (242 aa)). 57–64 (GPSGCGKS) contributes to the ATP binding site.

Belongs to the ABC transporter superfamily. Phosphate importer (TC 3.A.1.7) family. As to quaternary structure, the complex is composed of two ATP-binding proteins (PstB), two transmembrane proteins (PstC and PstA) and a solute-binding protein (PstS).

It is found in the cell membrane. The catalysed reaction is phosphate(out) + ATP + H2O = ADP + 2 phosphate(in) + H(+). Its function is as follows. Part of the ABC transporter complex PstSACB involved in phosphate import. Responsible for energy coupling to the transport system. This chain is Phosphate import ATP-binding protein PstB 2, found in Listeria monocytogenes serotype 4b (strain F2365).